Consider the following 132-residue polypeptide: L-ectoine synthase (132 aa).

It belongs to the ectoine synthase family.

It catalyses the reaction (2S)-4-acetamido-2-aminobutanoate = L-ectoine + H2O. Its pathway is amine and polyamine biosynthesis; ectoine biosynthesis; L-ectoine from L-aspartate 4-semialdehyde: step 3/3. Its function is as follows. Catalyzes the circularization of gamma-N-acetyl-alpha,gamma-diaminobutyric acid (ADABA) to ectoine (1,4,5,6-tetrahydro-2-methyl-4-pyrimidine carboxylic acid), which is an excellent osmoprotectant. The polypeptide is L-ectoine synthase (ectC) (Streptomyces anulatus (Streptomyces chrysomallus)).